A 496-amino-acid chain; its full sequence is Probable cytosol aminopeptidase (496 aa).

2 residues coordinate Mn(2+): Lys-266 and Asp-271. Residue Lys-278 is part of the active site. Mn(2+) contacts are provided by Asp-289, Asp-348, and Glu-350. Arg-352 is a catalytic residue.

Belongs to the peptidase M17 family. Mn(2+) is required as a cofactor.

Its subcellular location is the cytoplasm. The enzyme catalyses Release of an N-terminal amino acid, Xaa-|-Yaa-, in which Xaa is preferably Leu, but may be other amino acids including Pro although not Arg or Lys, and Yaa may be Pro. Amino acid amides and methyl esters are also readily hydrolyzed, but rates on arylamides are exceedingly low.. It catalyses the reaction Release of an N-terminal amino acid, preferentially leucine, but not glutamic or aspartic acids.. Presumably involved in the processing and regular turnover of intracellular proteins. Catalyzes the removal of unsubstituted N-terminal amino acids from various peptides. This is Probable cytosol aminopeptidase from Pseudomonas fluorescens (strain Pf0-1).